The following is a 121-amino-acid chain: MTLEDECKQLMVCRDEIKKLKLKEKEAKNRILTYLKNHNQYGVIFKHNKKQISITVETTPVKKNPSLKEKQTKIQDILSGVGVANPDATTQEIIDGLKTTTITDTSNQKDVLKLKMGKRAG.

Residues 8–37 adopt a coiled-coil conformation; sequence KQLMVCRDEIKKLKLKEKEAKNRILTYLKN.

This is an uncharacterized protein from Aedes vexans (Inland floodwater mosquito).